The sequence spans 86 residues: Small ribosomal subunit protein eS21 (86 aa).

The protein belongs to the eukaryotic ribosomal protein eS21 family. As to quaternary structure, component of the 40S small ribosomal subunit.

Its subcellular location is the cytoplasm. It is found in the cytosol. It localises to the rough endoplasmic reticulum. In Suberites domuncula (Sponge), this protein is Small ribosomal subunit protein eS21 (RPS21).